Consider the following 568-residue polypeptide: Zinc finger protein 76 (568 aa).

Lysine 24 is covalently cross-linked (Glycyl lysine isopeptide (Lys-Gly) (interchain with G-Cter in SUMO2)). 3 repeat units span residues 34 to 45 (IQLEDGTTAYIH), 62 to 73 (VQLEDGSMAYIH), and 88 to 99 (VQLEDGSTAYIH). The segment at 34–99 (IQLEDGTTAY…LEDGSTAYIH (66 aa)) is 3 X 12 AA approximate repeats. C2H2-type zinc fingers lie at residues 165 to 189 (FRCGYKGCGRLYTTAHHLKVHERAH), 195 to 219 (YRCDFPSCGKAFATGYGLKSHVRTH), 225 to 249 (YKCPEELCSKAFKTSGDLQKHVRTH), 255 to 279 (FRCPFEGCGRSFTTSNIRKVHVRTH), 285 to 309 (YTCPEPHCGRGFTSATNYKNHVRIH), 315 to 339 (YVCTVPGCGKRFTEYSSLYKHHVVH), and 345 to 368 (YTCSSCGKTYRQTSTLAMHKRSAH). The disordered stretch occupies residues 365–402 (RSAHGELEATEESEQALYEQQQLEAASAAEESPPPKPT). The span at 379–395 (QALYEQQQLEAASAAEE) shows a compositional bias: low complexity.

It belongs to the krueppel C2H2-type zinc-finger protein family.

The protein resides in the nucleus. Its function is as follows. May be involved in transcriptional regulation. This chain is Zinc finger protein 76 (Znf76), found in Mus musculus (Mouse).